We begin with the raw amino-acid sequence, 92 residues long: Small ribosomal subunit protein uS19 (92 aa).

It belongs to the universal ribosomal protein uS19 family.

Its function is as follows. Protein S19 forms a complex with S13 that binds strongly to the 16S ribosomal RNA. This Geobacillus kaustophilus (strain HTA426) protein is Small ribosomal subunit protein uS19.